The primary structure comprises 415 residues: Heterogeneous nuclear ribonucleoprotein F (415 aa).

N-acetylmethionine is present on methionine 1. Methionine 2 is modified (N-acetylmethionine; in Heterogeneous nuclear ribonucleoprotein F, N-terminally processed). In terms of domain architecture, RRM 1 spans 13–85; it reads VKLRGLPWSC…ESMGHRYIEV (73 aa). Lysine 72 is covalently cross-linked (Glycyl lysine isopeptide (Lys-Gly) (interchain with G-Cter in SUMO)). Residues 81–86 are interaction with RNA; the sequence is RYIEVF. Lysine 87 participates in a covalent cross-link: Glycyl lysine isopeptide (Lys-Gly) (interchain with G-Cter in SUMO2). Phosphoserine occurs at positions 104, 107, and 161. Residues 111–188 enclose the RRM 2 domain; it reads GFVRLRGLPF…RYIEVFKSSQ (78 aa). A Glycyl lysine isopeptide (Lys-Gly) (interchain with G-Cter in SUMO2) cross-link involves residue lysine 167. The interaction with RNA stretch occupies residues 179 to 184; sequence RYIEVF. A Glycyl lysine isopeptide (Lys-Gly) (interchain with G-Cter in SUMO2) cross-link involves residue lysine 185. 3 positions are modified to phosphoserine: serine 187, serine 193, and serine 195. Position 200 is an N6-acetyllysine; alternate (lysine 200). Residue lysine 200 forms a Glycyl lysine isopeptide (Lys-Gly) (interchain with G-Cter in SUMO2); alternate linkage. Threonine 215 carries the phosphothreonine modification. N6-acetyllysine; alternate is present on lysine 224. Lysine 224 participates in a covalent cross-link: Glycyl lysine isopeptide (Lys-Gly) (interchain with G-Cter in SUMO2); alternate. Serine 265 is subject to Phosphoserine. In terms of domain architecture, RRM 3 spans 289–366; that stretch reads HCVHMRGLPY…IELFLNSTTG (78 aa). Residues 355-360 form an interaction with RNA region; it reads RYIELF.

In terms of assembly, identified in the spliceosome C complex. Interacts with AGO1, AGO2, TBP and TXNL4/DIM1. Sumoylated.

It is found in the nucleus. The protein resides in the nucleoplasm. In terms of biological role, component of the heterogeneous nuclear ribonucleoprotein (hnRNP) complexes which provide the substrate for the processing events that pre-mRNAs undergo before becoming functional, translatable mRNAs in the cytoplasm. Plays a role in the regulation of alternative splicing events. Binds G-rich sequences in pre-mRNAs and keeps target RNA in an unfolded state. The chain is Heterogeneous nuclear ribonucleoprotein F (HNRNPF) from Macaca fascicularis (Crab-eating macaque).